The following is a 219-amino-acid chain: MSNLTLDVHTADGSTNGTVDLPSSVFDVEVSTPLLHQVVTAQLAARRQGTHATKTRGQVRGGGRKPYRQKGTGRARQGSIRAPQFTGGGTVHGPQPRDYDQRTPKKMKAAALRGALSDRARHDRIHVVEDLVPGQTPSTKAARTFIGRLTDRKSVLVVLGREDVNSIKSARNLPNVHILPSDQLNTYDVLNSDDLVFSVEALNAFIERATGAETKEESK.

A disordered region spans residues 45–103; the sequence is ARRQGTHATKTRGQVRGGGRKPYRQKGTGRARQGSIRAPQFTGGGTVHGPQPRDYDQRT. Over residues 62-73 the composition is skewed to basic residues; the sequence is GGRKPYRQKGTG.

This sequence belongs to the universal ribosomal protein uL4 family. Part of the 50S ribosomal subunit.

One of the primary rRNA binding proteins, this protein initially binds near the 5'-end of the 23S rRNA. It is important during the early stages of 50S assembly. It makes multiple contacts with different domains of the 23S rRNA in the assembled 50S subunit and ribosome. Its function is as follows. Forms part of the polypeptide exit tunnel. The sequence is that of Large ribosomal subunit protein uL4 from Corynebacterium kroppenstedtii (strain DSM 44385 / JCM 11950 / CIP 105744 / CCUG 35717).